The chain runs to 208 residues: F-box/kelch-repeat protein At2g43270 (208 aa).

One can recognise an F-box domain in the interval 1-44 (MIYVVPDLLEEIFLGLPLKSILRFKTVSKQWRSILESKSFAERR). One copy of the Kelch repeat lies at 149-200 (RDKFNGSYKVVRMCFSPVEKCEVLDVETGEWSELNPPPNDIDVGRKSVCVNG).

The sequence is that of F-box/kelch-repeat protein At2g43270 from Arabidopsis thaliana (Mouse-ear cress).